The sequence spans 1286 residues: Protein patched (1286 aa).

The Cytoplasmic segment spans residues 1–76; the sequence is MDRDSLPRVP…GSSVQKHAGK (76 aa). Residues 77 to 92 form a helical membrane-spanning segment; that stretch reads VLFVAILVLSTFCVGL. At 93–427 the chain is on the extracellular side; it reads KSAQIHSKVH…DDILAKFSHP (335 aa). N142, N298, N335, and N388 each carry an N-linked (GlcNAc...) asparagine glycan. A helical transmembrane segment spans residues 428-448; that stretch reads SALSIVIGVAVTVLYAFCTLL. The SSD domain maps to 428 to 583; sequence SALSIVIGVA…LLVFPAMISL (156 aa). Over 449–465 the chain is Cytoplasmic; sequence RWRDPVRGQSSVGVAGV. The helical transmembrane segment at 466-486 threads the bilayer; it reads LLMCFSTAAGLGLSALLGIVF. Topologically, residues 487–492 are extracellular; it reads NAASTQ. A helical membrane pass occupies residues 493–511; it reads VVPFLALGLGVDHIFMLTA. Residues 512-532 lie on the Cytoplasmic side of the membrane; that stretch reads AYAESNRREQTKLILKKVGPS. A helical transmembrane segment spans residues 533–553; that stretch reads ILFSACSTAGSFFAAAFIPVP. Topologically, residues 554-562 are extracellular; that stretch reads ALKVFCLQA. The chain crosses the membrane as a helical span at residues 563–583; it reads AIVMCSNLAAALLVFPAMISL. The Cytoplasmic segment spans residues 584–677; the sequence is DLRRRTAGRA…QHYTPFLMRS (94 aa). A helical transmembrane segment spans residues 678-699; that stretch reads WVKFLTVMGFLAALISSLYAST. The Extracellular segment spans residues 700–931; it reads RLQDGLDIID…IRDLSVKYEG (232 aa). N-linked (GlcNAc...) asparagine glycosylation is present at N807. A helical membrane pass occupies residues 932-952; sequence FGLPNYPSGIPFIFWEQYMTL. Topologically, residues 953–955 are cytoplasmic; sequence RSS. The helical transmembrane segment at 956-976 threads the bilayer; sequence LAMILACVLLAALVLVSLLLL. Over 977–1007 the chain is Extracellular; that stretch reads SVWAAVLVILSVLASLAQIFGAMTLLGIKLS. Residues 1008–1028 traverse the membrane as a helical segment; sequence AIPAVILILSVGMMLCFNVLI. Topologically, residues 1029–1056 are cytoplasmic; sequence SLGFMTSVGNRQRRVQLSMQMSLGPLVH. A helical transmembrane segment spans residues 1057-1077; it reads GMLTSGVAVFMLSTSPFEFVI. At 1078–1082 the chain is on the extracellular side; sequence RHFCW. A helical transmembrane segment spans residues 1083 to 1103; the sequence is LLLVVLCVGACNSLLVFPILL. Residues 1104 to 1286 are Cytoplasmic-facing; it reads SMVGPEAELV…RAVRSYNFTS (183 aa). Positions 1116-1237 are disordered; that stretch reads EHPDRISTPS…PPPFPTAYPP (122 aa). Composition is skewed to polar residues over residues 1141–1152 and 1165–1191; these read VQGSRSSRGSCQ and PSLT…NDWT. The span at 1199 to 1216 shows a compositional bias: low complexity; the sequence is PASYAAPPPAYHKAAAQQ. Over residues 1224-1235 the composition is skewed to pro residues; sequence PTTPPPPFPTAY.

It belongs to the patched family. As to quaternary structure, interacts (via C-terminal cytoplasmic region) with CG5504/l(2)tid; the interaction is probably direct. Interacts with hh/hedgehog.

The protein resides in the membrane. Its function is as follows. Segmentation polarity protein. Acts as a receptor for the hedgehog protein (hh). Associates with the smoothened protein (SMO) to transduce the hedgehog signal leading to the activation of wingless, decapentaplegic and patched itself. Participates in cell interactions that establish pattern within the segment and the imaginal disks during development. In the absence of HH, represses the constitutive signaling activity of smo through fused (FU). The polypeptide is Protein patched (Drosophila melanogaster (Fruit fly)).